We begin with the raw amino-acid sequence, 1064 residues long: Lysine-specific demethylase 4A (1064 aa).

N-acetylalanine is present on Ala2. Residues 14–56 (IMTFYPTMEEFRNFSRYIAYIESQGAHRAGLAKVVPPKEWKPR) enclose the JmjN domain. Tyr132 provides a ligand contact to 2-oxoglutarate. Residues 142–308 (EKHVDEWNIG…YGKQAVLCSC (167 aa)) enclose the JmjC domain. Fe cation is bound by residues His188 and Glu190. The 2-oxoglutarate site is built by Asn198 and Lys206. Cys234 and His240 together coordinate Zn(2+). Lys241 provides a ligand contact to 2-oxoglutarate. His276 serves as a coordination point for Fe cation. The Zn(2+) site is built by Cys306 and Cys308. Residues 358 to 384 (ELPPRAGNEEECPEEDMEGVEDGEEGD) are disordered. The span at 366-382 (EEECPEEDMEGVEDGEE) shows a compositional bias: acidic residues. Residue Lys471 forms a (Microbial infection) Glycyl lysine isopeptide (Lys-Gly) (interchain with G-Cter in SUMO) linkage. 2 disordered regions span residues 501–537 (FSGSKKKSSSSLGSGSSRDSISSDSETSEPLSCRAQG) and 616–641 (SDDETSEQLTPEEEAEETEAWAKPLS). Low complexity predominate over residues 509-532 (SSSLGSGSSRDSISSDSETSEPLS). The residue at position 523 (Ser523) is a Phosphoserine. Residues 597–638 (RQPLSKLPRHHPLVLQECVSDDETSEQLTPEEEAEETEAWAK) are interaction with NCOR1. Acidic residues predominate over residues 616–634 (SDDETSEQLTPEEEAEETE). Residues 709–767 (MCFTSTGCSTDINLSTPYLEEDGTSILVSCKKCSVRVHASCYGVPPAKASEDWMCSRCS) form a PHD-type 1 zinc finger. The C2HC pre-PHD-type zinc finger occupies 772 to 805 (EEDCCLCSLRGGALQRANDDRWVHVSCAVAILEA). The segment at 828-885 (LKCIFCKKRRKRTAGCCVQCSHGRCPTAFHVSCAQAAGVMMQPDDWPFVVFITCFRHK) adopts a PHD-type 2 zinc-finger fold. Tudor domains follow at residues 897–954 (QSIT…CLQF) and 955–1011 (GPPA…EELP).

The protein belongs to the JHDM3 histone demethylase family. In terms of assembly, interacts with histone deacetylase proteins HDAC1, HDAC2 and HDAC3. Interacts with RB and NCOR1. Interacts with VRK1. Interacts with FBXO22; this interaction promotes KDM4A ubiquitination. As to quaternary structure, (Microbial infection) Interacts with HTLV-1 Tax protein. Fe(2+) serves as cofactor. (Microbial infection) SUMOylated by human herpesvirus 8 E3 SUMO-protein ligase K-bZIP/K8 at Lys-471; thereby modulating the chromatin binding and histone demethylase activity of KDM4A. In terms of processing, ubiquitinated by RNF8 and RNF168 following DNA damage, leading to its degradation. Degradation promotes accessibility of H4K20me2 mark for DNA repair protein TP53BP1, which is then recruited. Also ubiquitinated by the SCF(FBXO22) complex; leading to proteasomal degradation. As to expression, ubiquitous.

It is found in the nucleus. It carries out the reaction N(6),N(6),N(6)-trimethyl-L-lysyl(9)-[histone H3] + 2 2-oxoglutarate + 2 O2 = N(6)-methyl-L-lysyl(9)-[histone H3] + 2 formaldehyde + 2 succinate + 2 CO2. The catalysed reaction is N(6),N(6),N(6)-trimethyl-L-lysyl(36)-[histone H3] + 2 2-oxoglutarate + 2 O2 = N(6)-methyl-L-lysyl(36)-[histone H3] + 2 formaldehyde + 2 succinate + 2 CO2. Its activity is regulated as follows. Several specific inhibitors are being developed and tested. Its function is as follows. Histone demethylase that specifically demethylates 'Lys-9' and 'Lys-36' residues of histone H3, thereby playing a central role in histone code. Does not demethylate histone H3 'Lys-4', H3 'Lys-27' nor H4 'Lys-20'. Demethylates trimethylated H3 'Lys-9' and H3 'Lys-36' residue, while it has no activity on mono- and dimethylated residues. Demethylation of Lys residue generates formaldehyde and succinate. Participates in transcriptional repression of ASCL2 and E2F-responsive promoters via the recruitment of histone deacetylases and NCOR1, respectively. In terms of biological role, crucial for muscle differentiation, promotes transcriptional activation of the Myog gene by directing the removal of repressive chromatin marks at its promoter. Lacks the N-terminal demethylase domain. The protein is Lysine-specific demethylase 4A (KDM4A) of Homo sapiens (Human).